Here is a 448-residue protein sequence, read N- to C-terminus: Exoglucanase GH7B (448 aa).

Residues 1 to 17 (MSLAVVFLLGFLAVSHG) form the signal peptide. Gln-18 bears the Pyrrolidone carboxylic acid mark. 2 disulfides stabilise this stretch: Cys-62-Cys-83 and Cys-73-Cys-79. Residues Tyr-97, 119 to 120 (DI), and Lys-197 each bind substrate. Intrachain disulfides connect Cys-154/Cys-415, Cys-188/Cys-226, Cys-192/Cys-225, Cys-246/Cys-271, Cys-254/Cys-259, and Cys-276/Cys-350. Catalysis depends on Glu-228, which acts as the Nucleophile. Substrate-binding positions include 230–233 (DIWE) and His-244. Catalysis depends on Glu-233, which acts as the Proton donor/acceptor. Substrate is bound by residues Arg-266 and Asp-274. Positions 396 and 412 each coordinate substrate.

This sequence belongs to the glycosyl hydrolase 7 (cellulase C) family. Monomer. Highly expressed in the hepatopancreas (at protein level). Little or no expression detected in the hindgut or the rest of the body (at protein level).

Its subcellular location is the secreted. The catalysed reaction is Hydrolysis of (1-&gt;4)-beta-D-glucosidic linkages in cellulose and cellotetraose, releasing cellobiose from the non-reducing ends of the chains.. Its function is as follows. Exocellobiohydrolase (CBH) that catalyzes the hydrolysis of 1,4-beta-D-glucosidic bonds in cellulose to release the disaccharide cellobiose. The degradation of cellulose involves an interplay between different cellulolytic enzymes. Hydrolysis starts with endoglucanases (EGs), which cut internal beta-1,4-glucosidic bonds in cellulose to reduce the polymerization degree of the substrate and create new chain ends for exocellobiohydrolases (CBHs). The CBHs release the disaccharide cellobiose from the non-reducing end of the cellulose polymer chain. Finally, beta-1,4-glucosidases hydrolyze the cellobiose and other short cello-oligosaccharides into glucose units. This Limnoria quadripunctata (Gribble) protein is Exoglucanase GH7B.